The sequence spans 196 residues: MCWAAAIPIAISGAQAISGQNAQAKMIAAQTAAGRRQAMEIMRQTNIQNADLSLQARSKLEEASAELTSQNMQKVQAIGSIRAAIGESMLEGSSMDRIKRVTEGQFIREANMVTENYRRDYQAIFAQQLGGTQSAASQIDEIYKSEQKQKSKLQMVLDPLAIMGSSAASAYASGAFDSKSTTKAPIVAAKGTKTGR.

It belongs to the T7virus internal virion protein gp14 family. Interacts with the portal protein. Interacts with gp15.

Its subcellular location is the virion. It localises to the host cell outer membrane. Component of the cylindrical core that assembles on the inner surface of the capsid during capsid formation and plays a role in viral DNA ejection into the host cell. The inner core is composed of stacked rings of gp14, gp15 and gp16 proteins. Following binding to the host cell surface, the internal core is disassembled and gp14 is ejected along with gp15 and gp16 into the infected cell. May form a simple channel spanning the outer membrane. This chain is Internal virion protein gp14, found in Escherichia phage T7 (Bacteriophage T7).